The sequence spans 246 residues: MPIQPSGKETEEMEAEGDSAAEMNGEADESEEERSGSQTESEEESSEMDDEDYERRRSECVSEMLDLEKQFSELKEKLFRERLSQLRLRLEEVGAERAPEYTEPLGGLQQSLKIRIQVAGIYKGFCLDVIRNKYECELQGAKQHLESEKMLLYDTLLGELQERIQRLEEDRQSLDISSEWWDDKLHSRSSSKAGDAMPPSKRKKAPLVSGPYIVYMLQEIDILEDWTAIKKARAAVSPQKRKADGP.

The tract at residues 1-57 (MPIQPSGKETEEMEAEGDSAAEMNGEADESEEERSGSQTESEEESSEMDDEDYERRR) is disordered. 2 stretches are compositionally biased toward acidic residues: residues 11–32 (EEME…ESEE) and 40–52 (ESEE…DDED). A coiled-coil region spans residues 51–98 (EDYERRRSECVSEMLDLEKQFSELKEKLFRERLSQLRLRLEEVGAERA). Glycyl lysine isopeptide (Lys-Gly) (interchain with G-Cter in SUMO2) cross-links involve residues K184 and K242.

Belongs to the BRMS1 family. In terms of assembly, homohexamer (Potential). Interacts with SNX6, HDAC1 and RELA. Interacts with ARID4A. Identified in mSin3A corepressor complexes together with SIN3A, SIN3B, RBBP4, RBBP7, SAP30, SUDS3, ARID4A, HDAC1 and HDAC2. Interacts with SPOP; this recruits the protein to a ubiquitin ligase complex containing SPOP and CUL3. Ubiquitinated by a cullin-RING-based BCR (BTB-CUL3-RBX1) E3 ubiquitin-protein ligase complex containing SPOP, leading to proteasomal degradation.

The protein resides in the nucleus. It localises to the cytoplasm. Transcriptional repressor. Down-regulates transcription activation by NF-kappa-B by promoting the deacetylation of RELA at 'Lys-310'. Promotes HDAC1 binding to promoter regions. Down-regulates expression of anti-apoptotic genes that are controlled by NF-kappa-B. Promotes apoptosis in cells that have inadequate adherence to a substrate, a process called anoikis, and may thereby inhibit metastasis. The polypeptide is Breast cancer metastasis-suppressor 1 homolog (Brms1) (Mus musculus (Mouse)).